Consider the following 377-residue polypeptide: Citrate synthase (377 aa).

Active-site residues include His220, His259, and Asp313.

Belongs to the citrate synthase family. In terms of assembly, homodimer.

The enzyme catalyses oxaloacetate + acetyl-CoA + H2O = citrate + CoA + H(+). The protein operates within carbohydrate metabolism; tricarboxylic acid cycle; isocitrate from oxaloacetate: step 1/2. Its function is as follows. Might regulate the synthesis and function of enzymes involved in later enzymatic steps of Krebs cycle. Loss in activity results in sporulation defect. The polypeptide is Citrate synthase (gltA) (Deinococcus radiodurans (strain ATCC 13939 / DSM 20539 / JCM 16871 / CCUG 27074 / LMG 4051 / NBRC 15346 / NCIMB 9279 / VKM B-1422 / R1)).